Reading from the N-terminus, the 520-residue chain is MKLAYWMYEGTALSGIARVAGSMPKVHTVIHGPQGDGYINVMFSMLERFHKLPPFTLSPIGRREMARGSRARLVETVRRVDALHQPDVIVITPTCSSTLLQEDLLAVANSLGRQTKARLIVPQVNAFRDLEHFAMDDFLAQMVAAFAVEQPKTERFTVNLIGPSYLGFHQIHDLNEIRTMLEEIGIGVNAVIPYGATVETLRSLTRAHLNICLYREYGRETCEYLRKRFGIDYISITPMGIRQTGRFLRALGEQAGIDVTPYIRRHLAPSGALARFTKSVDALSSLFGKRAVVFGDFSHAVGATYLLREIGLQVVWAGTYMTAWKDEFTEAVAALTDEAFVCDDFQAVSRKIRDTQPDIVFGTQMERHSAARYELPCIVISSPAHILNFPLFPAPVLGYRGMTRLLDTINQTIKLGLEEHLVNMFGEDTASERQMEAASAAARGTATAPTGAAGAVATVDELQWDAEAEKALKQVPFFVRGKVQRNTENYARERGYSEVTLDVIYAAKAYFEGKGNQGNR.

Residue Asp36 participates in [4Fe-4S] cluster binding. Residue Asp281 is the Proton donor of the active site. Gly416 to Leu417 contributes to the substrate binding site.

The protein belongs to the ChlB/BchB/BchZ family. In terms of assembly, protochlorophyllide reductase is composed of three subunits; BchL, BchN and BchB. Forms a heterotetramer of two BchB and two BchN subunits. [4Fe-4S] cluster is required as a cofactor.

The enzyme catalyses chlorophyllide a + oxidized 2[4Fe-4S]-[ferredoxin] + 2 ADP + 2 phosphate = protochlorophyllide a + reduced 2[4Fe-4S]-[ferredoxin] + 2 ATP + 2 H2O. It participates in porphyrin-containing compound metabolism; bacteriochlorophyll biosynthesis (light-independent). In terms of biological role, component of the dark-operative protochlorophyllide reductase (DPOR) that uses Mg-ATP and reduced ferredoxin to reduce ring D of protochlorophyllide (Pchlide) to form chlorophyllide a (Chlide). This reaction is light-independent. The NB-protein (BchN-BchB) is the catalytic component of the complex. The chain is Light-independent protochlorophyllide reductase subunit B (bchB) from Heliobacterium modesticaldum (strain ATCC 51547 / Ice1).